The primary structure comprises 340 residues: Phosphate acyltransferase (340 aa).

Belongs to the PlsX family. In terms of assembly, homodimer. Probably interacts with PlsY.

The protein resides in the cytoplasm. It catalyses the reaction a fatty acyl-[ACP] + phosphate = an acyl phosphate + holo-[ACP]. Its pathway is lipid metabolism; phospholipid metabolism. Catalyzes the reversible formation of acyl-phosphate (acyl-PO(4)) from acyl-[acyl-carrier-protein] (acyl-ACP). This enzyme utilizes acyl-ACP as fatty acyl donor, but not acyl-CoA. The sequence is that of Phosphate acyltransferase from Nitrosococcus oceani (strain ATCC 19707 / BCRC 17464 / JCM 30415 / NCIMB 11848 / C-107).